The sequence spans 593 residues: High affinity cGMP-specific 3',5'-cyclic phosphodiesterase 9A (593 aa).

The interval 87 to 141 (SAGVEDKRTTSRGQSAERPLRDRRVVGLEQPRREGAFESGQVEPRPREPQGCYQE) is disordered. Residues 104 to 122 (RPLRDRRVVGLEQPRREGA) show a composition bias toward basic and acidic residues. Residues 236–557 (PRRDVPTYPK…DRYEELKRID (322 aa)) form the PDEase domain. His-312 (proton donor) is an active-site residue. Residue 312-316 (HNFRH) coordinates 3',5'-cyclic GMP. 3 residues coordinate Zn(2+): His-316, His-352, and Asp-353. Asp-353 serves as a coordination point for 3',5'-cyclic GMP. Asp-353 contributes to the Mg(2+) binding site. Ser-379 carries the post-translational modification Phosphoserine. 3',5'-cyclic GMP contacts are provided by residues Asp-462, Tyr-484, and 512-513 (AQ). Position 462 (Asp-462) interacts with Zn(2+). The interval 564–593 (QKKTDSLTSGATEKSRERSRDVKNSEGDCA) is disordered. A compositionally biased stretch (basic and acidic residues) spans 576 to 593 (EKSRERSRDVKNSEGDCA).

The protein belongs to the cyclic nucleotide phosphodiesterase family. PDE9 subfamily. As to quaternary structure, homodimer. It depends on Zn(2+) as a cofactor. Mg(2+) serves as cofactor. Expressed in all tissues examined (testis, brain, small intestine, skeletal muscle, heart, lung, thymus, spleen, placenta, kidney, liver, pancreas, ovary and prostate) except blood. Highest levels in brain, heart, kidney, spleen, prostate and colon. Isoform PDE9A12 is found in prostate. In brain, present in the cortex, cerebellum, and subiculum (at protein level). In heart, primarily localizes to myocytes.

It is found in the cell projection. Its subcellular location is the ruffle membrane. It localises to the cytoplasm. The protein resides in the perinuclear region. The protein localises to the golgi apparatus. It is found in the endoplasmic reticulum. Its subcellular location is the cell membrane. It localises to the sarcolemma. The enzyme catalyses 3',5'-cyclic GMP + H2O = GMP + H(+). It participates in purine metabolism; 3',5'-cyclic GMP degradation; GMP from 3',5'-cyclic GMP: step 1/1. Inhibited by zaprinast; inhibitor is however not specific to PDE9A. Specifically inhibited by BAY-73-6691 (1-(2-chlorophenyl)-6-((2R)-3,3,3- trifluoro-2-methylpropyl)-1,5-dihydro-4H-pyrazolo(3,4-d)pyrimidine-4-one). BAY-73-9961 has two enantiomers, (R) and (S), due to the presence of a chiral center, and both forms vary in their pattern of interaction. Specifically inhibited by PF-4181366 (4H-Pyrazolo[3,4-d]pyrimidin-4-one, 1- cyclopentyl-1,5-dihydro-6-[(3S,4S)-4-methyl- 1-(6-quinoxalinylmethyl)-3-pyrrolidinyl]-one). Specifically inhibited by PF-4449613 ((R)-6-(1-(3-phenoxyazetidin-1-yl)ethyl)-1-(tetrahydro-2H-pyran-4-yl)-1H-pyrazolo[3,4-d]pyrimidin- 4(5H)-one). Specifically inhibited by inhibitor 28 (2-((1-(2-Chlorophenyl)-4-hydroxy-1Hpyrazolo[ 3,4-d]pyrimidin-6-yl)amino)-N-(4- methoxyphenyl)propanamide): inhibitor forms a hydrogen bond with Tyr-484 and Gln-513. Specifically inhibited by 1-Cyclopentyl-6-[(1r)-1-(3-phenoxyazetidin- 1-Yl)ethyl]-1,5-dihydro-4h-pyrazolo[3,4-D] pyrimidin-4-one: inhibitor forms a hydrogen bond with Tyr-484 and Gln-513. Functionally, specifically hydrolyzes the second messenger cGMP, which is a key regulator of many important physiological processes. Highly specific: compared to other members of the cyclic nucleotide phosphodiesterase family, has the highest affinity and selectivity for cGMP. Specifically regulates natriuretic-peptide-dependent cGMP signaling in heart, acting as a regulator of cardiac hypertrophy in myocytes and muscle. Does not regulate nitric oxide-dependent cGMP in heart. Additional experiments are required to confirm whether its ability to hydrolyze natriuretic-peptide-dependent cGMP is specific to heart or is a general feature of the protein. In brain, involved in cognitive function, such as learning and long-term memory. The protein is High affinity cGMP-specific 3',5'-cyclic phosphodiesterase 9A of Homo sapiens (Human).